Here is a 399-residue protein sequence, read N- to C-terminus: F-box protein At1g30790 (399 aa).

Residues 3-49 (RQEIDHIPFDLTVEILTRLPAKSLMKFKCVSKLWSSIIHNQSFIDSF) form the F-box domain.

The polypeptide is F-box protein At1g30790 (Arabidopsis thaliana (Mouse-ear cress)).